The sequence spans 123 residues: Large ribosomal subunit protein uL24 (123 aa).

This sequence belongs to the universal ribosomal protein uL24 family. In terms of assembly, part of the 50S ribosomal subunit.

In terms of biological role, one of two assembly initiator proteins, it binds directly to the 5'-end of the 23S rRNA, where it nucleates assembly of the 50S subunit. One of the proteins that surrounds the polypeptide exit tunnel on the outside of the subunit. The chain is Large ribosomal subunit protein uL24 from Solibacter usitatus (strain Ellin6076).